The chain runs to 820 residues: Probable ATP-dependent RNA helicase DDX23 (820 aa).

Positions Met-1–Lys-42 are enriched in basic and acidic residues. A disordered region spans residues Met-1–Ser-244. Residues Ser-14 and Ser-16 each carry the phosphoserine modification. A compositionally biased stretch (basic residues) spans Asp-43–Ser-65. The segment covering Lys-66–Arg-105 has biased composition (basic and acidic residues). 2 positions are modified to phosphoserine: Ser-107 and Ser-109. Composition is skewed to basic and acidic residues over residues Arg-112–Pro-137, Leu-147–Asn-226, and Gly-233–Ser-244. The Q motif motif lies at Arg-391 to Arg-419. The region spanning Ile-422–Val-627 is the Helicase ATP-binding domain. Residue Ala-435–Thr-442 coordinates ATP. The DEAD box motif lies at Asp-549–Asp-552. A Helicase C-terminal domain is found at Lys-651–Pro-799. Residues Lys-686 and Lys-811 each participate in a glycyl lysine isopeptide (Lys-Gly) (interchain with G-Cter in SUMO2) cross-link.

It belongs to the DEAD box helicase family. DDX23/PRP28 subfamily. In terms of assembly, the phosphorylated form (by SRPK2) is a component of the U4/U6-U5 tri-snRNP complex composed of the U4, U6 and U5 snRNAs and at least PRPF3, PRPF4, PRPF6, PRPF8, PRPF31, SNRNP200, TXNL4A, WDR57, SNRNP40, DDX23, CD2BP2, PPIH, SNU13, EFTUD2, SART1 and USP39. Identified in the spliceosome C complex. Interacts with ERBB4. Interacts with ERCC6. Post-translationally, in vitro phosphorylated by CLK1 and U1 snRNP-associated protein kinase. Phosphorylated by SRPK2 and this phosphorylation is required for its association with the tri-snRNP (U4/U6-U5 tri-small nuclear ribonucleoproteins) and subsequent spliceosomal B complex formation. May be phosphorylated by SRPK2 on Ser residues in the SR domain; the phosphorylation is required for the removal of inappropriate R-loops during transcription.

Its subcellular location is the nucleus. The protein localises to the chromosome. It carries out the reaction ATP + H2O = ADP + phosphate + H(+). Functionally, involved in pre-mRNA splicing and its phosphorylated form (by SRPK2) is required for spliceosomal B complex formation. Independently of its spliceosome formation function, required for the suppression of incorrect R-loops formed during transcription; R-loops are composed of a DNA:RNA hybrid and the associated non-template single-stranded DNA. The polypeptide is Probable ATP-dependent RNA helicase DDX23 (Homo sapiens (Human)).